The sequence spans 1887 residues: Bifunctional serine/threonine-protein kinase/NEDD4-like E3 ubiquitin-protein ligase (1887 aa).

Disordered stretches follow at residues 19–55 and 72–98; these read TPQVNLFNNSNNGGNNSNNGGNNSTPTLTKTPSTTNF and TDNYNFNNNNNNNNNNNNNNNNNTKEN. Low complexity-rich tracts occupy residues 26–54 and 72–97; these read NNSNNGGNNSNNGGNNSTPTLTKTPSTTN and TDNYNFNNNNNNNNNNNNNNNNNTKE. RCC1 repeat units lie at residues 206–260, 262–314, 356–409, 411–470, 472–528, and 529–581; these read QGNL…ALTI, GKVY…NNNN, KGLL…VLTN, GLVF…AISD, NDTY…AMSI, and DGSL…IVEK. Residues 299 to 333 are disordered; the sequence is NNNNNNNNNNSTNNNNNNNNDGAQQQFSLSQNSSS. Disordered regions lie at residues 594–619, 823–858, and 1030–1088; these read LPSSTQSQQQTELSLPSSVNSSSDSN, VLVHQDEKQQQREKSETELEEEQDEEEEDSEIKNGT, and DDDN…NNNN. Over residues 825–839 the composition is skewed to basic and acidic residues; it reads VHQDEKQQQREKSET. Acidic residues predominate over residues 840–852; the sequence is ELEEEQDEEEEDS. The segment covering 1036-1088 has biased composition (low complexity); sequence ENNSVNNNSNNNNNNNNNNNNNNNNNNNNNNNIDNNINSNSINDSSNNNNNNN. Residues 1158–1437 enclose the Protein kinase domain; it reads YDIIKTLSTH…AHQIAVHPYF (280 aa). ATP is bound by residues 1164 to 1172 and lysine 1184; that span reads LSTHPHNVY. The Proton acceptor role is filled by aspartate 1281. One can recognise an HECT domain in the interval 1501 to 1887; the sequence is ESNKLFCRLE…LEYVDGFAFI (387 aa). Positions 1586 to 1628 are disordered; it reads NNNNNNEENNNNNNNNNNNNNNNNNNNNNNNNNNNNNNNNNEE. Cysteine 1855 functions as the Glycyl thioester intermediate in the catalytic mechanism.

This sequence in the N-terminal section; belongs to the protein kinase superfamily. Ser/Thr protein kinase family. In the C-terminal section; belongs to the protein kinase superfamily. CAMK Ser/Thr protein kinase family.

It catalyses the reaction L-seryl-[protein] + ATP = O-phospho-L-seryl-[protein] + ADP + H(+). The enzyme catalyses L-threonyl-[protein] + ATP = O-phospho-L-threonyl-[protein] + ADP + H(+). It carries out the reaction S-ubiquitinyl-[E2 ubiquitin-conjugating enzyme]-L-cysteine + [acceptor protein]-L-lysine = [E2 ubiquitin-conjugating enzyme]-L-cysteine + N(6)-ubiquitinyl-[acceptor protein]-L-lysine.. The protein operates within protein modification; protein ubiquitination. In Dictyostelium discoideum (Social amoeba), this protein is Bifunctional serine/threonine-protein kinase/NEDD4-like E3 ubiquitin-protein ligase.